Consider the following 235-residue polypeptide: Ribitol-5-phosphate cytidylyltransferase (235 aa).

Residues 7 to 10 (LAGG), 82 to 88 (GADRNTS), and Ser-113 each bind CTP.

It belongs to the IspD/TarI cytidylyltransferase family. TarI subfamily.

It catalyses the reaction D-ribitol 5-phosphate + CTP + H(+) = CDP-L-ribitol + diphosphate. It functions in the pathway cell wall biogenesis; poly(ribitol phosphate) teichoic acid biosynthesis. In terms of biological role, catalyzes the transfer of the cytidylyl group of CTP to D-ribitol 5-phosphate. The chain is Ribitol-5-phosphate cytidylyltransferase from Streptococcus pneumoniae serotype 19F (strain G54).